We begin with the raw amino-acid sequence, 410 residues long: Exopolygalacturonase (410 aa).

The first 22 residues, 1-22, serve as a signal peptide directing secretion; the sequence is MACIDNAMRALFLLALFCVVHG. N-linked (GlcNAc...) asparagine glycosylation is found at N89 and N201. PbH1 repeat units lie at residues 192–218, 219–240, 242–262, 272–293, and 337–377; these read CKDM…HMGD, SSGV…SIGP, TSKV…SIGS, VTDI…RIKA, and ASKV…TMDD. Residue D233 is the Proton donor of the active site. A disulfide bond links C235 and C252. N246 carries N-linked (GlcNAc...) asparagine glycosylation. H256 is an active-site residue. An N-linked (GlcNAc...) asparagine glycan is attached at N349. A disulfide bridge links C364 with C370. N-linked (GlcNAc...) asparagine glycosylation occurs at N387. Cysteines 393 and 409 form a disulfide.

Belongs to the glycosyl hydrolase 28 family. Pollen.

The protein resides in the secreted. The protein localises to the cell wall. It carries out the reaction [(1-&gt;4)-alpha-D-galacturonosyl](n) + H2O = alpha-D-galacturonate + [(1-&gt;4)-alpha-D-galacturonosyl](n-1). Its function is as follows. May function in depolymerizing pectin during pollen development, germination, and tube growth. Acts as an exo-polygalacturonase. The chain is Exopolygalacturonase (PG2C) from Zea mays (Maize).